Consider the following 906-residue polypeptide: NADH-quinone oxidoreductase subunit G (906 aa).

The 2Fe-2S ferredoxin-type domain maps to 2 to 83 (AKIYVDSKIY…GAIISIKSTE (82 aa)). [2Fe-2S] cluster contacts are provided by Cys34, Cys45, Cys48, and Cys67. In terms of domain architecture, 4Fe-4S His(Cys)3-ligated-type spans 83 to 122 (ESEVFRSAIVELLLTNHPHDCPVCEEGGHCHLQDMTVMVK). 12 residues coordinate [4Fe-4S] cluster: His99, Cys103, Cys106, Cys112, Cys151, Cys154, Cys157, Cys201, Cys228, Cys231, Cys235, and Cys263. In terms of domain architecture, 4Fe-4S Mo/W bis-MGD-type spans 221–277 (MQYAPGICHNCSVGCNISIGERYGEIRRIENRYHENINHYLICDLGRFGYSHTNLNT).

Belongs to the complex I 75 kDa subunit family. Composed of 13 different subunits. Subunits NuoCD, E, F, and G constitute the peripheral sector of the complex. Requires [2Fe-2S] cluster as cofactor. [4Fe-4S] cluster is required as a cofactor.

It catalyses the reaction a quinone + NADH + 5 H(+)(in) = a quinol + NAD(+) + 4 H(+)(out). NDH-1 shuttles electrons from NADH, via FMN and iron-sulfur (Fe-S) centers, to quinones in the respiratory chain. Couples the redox reaction to proton translocation (for every two electrons transferred, four hydrogen ions are translocated across the cytoplasmic membrane), and thus conserves the redox energy in a proton gradient. The polypeptide is NADH-quinone oxidoreductase subunit G (nuoG) (Buchnera aphidicola subsp. Acyrthosiphon pisum (strain APS) (Acyrthosiphon pisum symbiotic bacterium)).